The chain runs to 270 residues: 4-hydroxy-tetrahydrodipicolinate reductase (270 aa).

NAD(+)-binding positions include 9–14 (GAGGRM) and Glu-35. Arg-36 is a binding site for NADP(+). NAD(+)-binding positions include 99–101 (GTT) and 123–126 (ASNF). His-156 functions as the Proton donor/acceptor in the catalytic mechanism. His-157 is a (S)-2,3,4,5-tetrahydrodipicolinate binding site. Lys-160 functions as the Proton donor in the catalytic mechanism. 166–167 (GT) is a binding site for (S)-2,3,4,5-tetrahydrodipicolinate.

This sequence belongs to the DapB family.

Its subcellular location is the cytoplasm. It catalyses the reaction (S)-2,3,4,5-tetrahydrodipicolinate + NAD(+) + H2O = (2S,4S)-4-hydroxy-2,3,4,5-tetrahydrodipicolinate + NADH + H(+). The enzyme catalyses (S)-2,3,4,5-tetrahydrodipicolinate + NADP(+) + H2O = (2S,4S)-4-hydroxy-2,3,4,5-tetrahydrodipicolinate + NADPH + H(+). The protein operates within amino-acid biosynthesis; L-lysine biosynthesis via DAP pathway; (S)-tetrahydrodipicolinate from L-aspartate: step 4/4. Its function is as follows. Catalyzes the conversion of 4-hydroxy-tetrahydrodipicolinate (HTPA) to tetrahydrodipicolinate. The polypeptide is 4-hydroxy-tetrahydrodipicolinate reductase (Haemophilus influenzae (strain 86-028NP)).